We begin with the raw amino-acid sequence, 503 residues long: Glycerol kinase (503 aa).

Threonine 14 is a binding site for ADP. ATP-binding residues include threonine 14, threonine 15, and serine 16. Threonine 14 serves as a coordination point for sn-glycerol 3-phosphate. Residue arginine 18 participates in ADP binding. Sn-glycerol 3-phosphate contacts are provided by arginine 84, glutamate 85, tyrosine 136, and aspartate 246. Glycerol contacts are provided by arginine 84, glutamate 85, tyrosine 136, aspartate 246, and glutamine 247. Threonine 268 and glycine 311 together coordinate ADP. ATP-binding residues include threonine 268, glycine 311, glutamine 315, and glycine 412. The ADP site is built by glycine 412 and asparagine 416.

It belongs to the FGGY kinase family. As to quaternary structure, homotetramer and homodimer (in equilibrium). Heterodimer with EIIA-Glc. Binds 1 zinc ion per glycerol kinase EIIA-Glc dimer. The zinc ion is important for dimerization.

The enzyme catalyses glycerol + ATP = sn-glycerol 3-phosphate + ADP + H(+). It functions in the pathway polyol metabolism; glycerol degradation via glycerol kinase pathway; sn-glycerol 3-phosphate from glycerol: step 1/1. Its activity is regulated as follows. Activity of this regulatory enzyme is affected by several metabolites. Allosterically and non-competitively inhibited by fructose 1,6-bisphosphate (FBP) and unphosphorylated phosphocarrier protein EIIA-Glc (III-Glc), an integral component of the bacterial phosphotransferase (PTS) system. Its function is as follows. Key enzyme in the regulation of glycerol uptake and metabolism. Catalyzes the phosphorylation of glycerol to yield sn-glycerol 3-phosphate. This chain is Glycerol kinase, found in Klebsiella pneumoniae (strain 342).